A 365-amino-acid chain; its full sequence is MFCCGGADEEPAGPPANQYAAPPNKAGNPNFGGGNRGEPRNPNAPRSGAPAKVLPIEIPSVALDELNRMAGNFGNKALIGEGSYGRVFCGKFKGEAVAIKKLDASSSEEPDSDFTSQLSVVSRLKHDHFVELLGYCLEANNRILIYQFATKGSLHDVLHGRKGVQGAEPGPVLNWNQRVKIAYGAAKGLEFLHEKVQPPIVHRDVRSSNVLLFDDFVAKMADFNLTNASSDTAARLHSTRVLGTFGYHAPEYAMTGQITQKSDVYSFGVVLLELLTGRKPVDHTMPKGQQSLVTWATPRLSEDKVKQCIDPKLNNDFPPKAVAKLAAVAALCVQYEADFRPNMTIVVKALQPLLNSKPAGPESTS.

The interval 1–50 (MFCCGGADEEPAGPPANQYAAPPNKAGNPNFGGGNRGEPRNPNAPRSGAP) is disordered. In terms of domain architecture, Protein kinase spans 73–354 (FGNKALIGEG…IVVKALQPLL (282 aa)). ATP-binding positions include 79–87 (IGEGSYGRV) and Lys-100. The residue at position 146 (Tyr-146) is a Phosphotyrosine. The Proton acceptor role is filled by Asp-204. Phosphoserine occurs at positions 208 and 238. Phosphothreonine is present on residues Thr-239 and Thr-244. Tyr-252 carries the phosphotyrosine modification.

The protein belongs to the protein kinase superfamily. Tyr protein kinase family.

The protein is Probable protein kinase At2g41970 of Arabidopsis thaliana (Mouse-ear cress).